Here is a 342-residue protein sequence, read N- to C-terminus: Lumican (342 aa).

Positions 1-18 (MNLGVFPLLLALIGGASS) are cleaved as a signal peptide. Sulfotyrosine is present on residues tyrosine 20, tyrosine 23, and tyrosine 34. Positions 32 to 70 (ALYGRSSPNCAPECNCPESYPSAMYCDELKLKSVPMVPP) constitute an LRRNT domain. 8 LRR repeats span residues 71-92 (GIKYLYLRNNQIDHIDDKAFEN), 95-118 (DLQWLILDHNLLENSKIKGKVFSK), 121-141 (QLKKLHINYNNLTESVGPLPK), 142-163 (SLVDLQLTNNKISKLGSFDGLV), 164-185 (NLTFIHLQHNQLKEDAVSAALK), 189-209 (SLEYLDLSFNQMTKLPSGLPV), 210-231 (SLLTLYLDNNKISNIPDEYFKR), and 234-254 (ALQYLRLSHNELADSGVPGNS). A glycan (N-linked (GlcNAc...) (keratan sulfate) asparagine) is linked at asparagine 92. A glycan (N-linked (GlcNAc...) (keratan sulfate) asparagine) is linked at asparagine 131. Asparagine 164 is a glycosylation site (N-linked (GlcNAc...) (keratan sulfate) asparagine). N-linked (GlcNAc...) (keratan sulfate) asparagine glycosylation is present at asparagine 256. 2 LRR repeats span residues 259 to 280 (SLLELDLSYNKLKSIPTVNENL) and 281 to 300 (ENYYLEVNELEKFDVKSFCK). A disulfide bond links cysteine 299 and cysteine 332. A Phosphoserine modification is found at serine 308. The LRR 11 repeat unit spans residues 309-330 (KIKHLRLDGNHITQTSLPPDMY).

Belongs to the small leucine-rich proteoglycan (SLRP) family. SLRP class II subfamily. Binds to laminin. Post-translationally, sulfated on tyrosine residue(s). Contains keratan sulfate. As to expression, cornea and other tissues.

Its subcellular location is the secreted. The protein resides in the extracellular space. It is found in the extracellular matrix. This Bos taurus (Bovine) protein is Lumican (LUM).